We begin with the raw amino-acid sequence, 430 residues long: Probable carboxypeptidase AFLA_037450 (430 aa).

An N-terminal signal peptide occupies residues 1-16 (MKSIYSLVLCTALTAA). Asn-84 is a glycosylation site (N-linked (GlcNAc...) asparagine). Position 156 (Asp-156) interacts with Zn(2+). Residue Glu-188 is the Proton acceptor of the active site. Glu-189 provides a ligand contact to Zn(2+). Asn-285 carries an N-linked (GlcNAc...) asparagine glycan.

This sequence belongs to the peptidase M20A family. Requires Zn(2+) as cofactor.

It localises to the secreted. This is Probable carboxypeptidase AFLA_037450 from Aspergillus flavus (strain ATCC 200026 / FGSC A1120 / IAM 13836 / NRRL 3357 / JCM 12722 / SRRC 167).